We begin with the raw amino-acid sequence, 746 residues long: WD repeat-containing protein 91 (746 aa).

A coiled-coil region spans residues 183-215; the sequence is QRTNQVQEENEVLRQKLFALQAEIHRLKKEEQQ. At S256 the chain carries Phosphoserine. Positions 265–278 are enriched in low complexity; it reads LLPQSKKSPSRLSP. The disordered stretch occupies residues 265-336; it reads LLPQSKKSPS…QHRQRRLQDH (72 aa). Positions 282-299 are enriched in polar residues; it reads PPQTQSSAKKESFGSQTT. 2 positions are modified to phosphoserine: S288 and S293. WD repeat units follow at residues 405–444, 447–487, 514–554, 559–598, 601–640, 663–701, and 708–746; these read EHHS…QTKA, ISKS…NLCE, AASS…QQLQ, PEPI…CAMS, AHCG…LKVS, VQVP…KVLE, and GHRA…AHKV.

Belongs to the WD repeat WDR91 family. In terms of assembly, interacts with WDR81; involved in early to late endosome cargo transport. Interacts with BECN1; negatively regulates the PI3 kinase/PI3K activity associated with endosomal membranes.

Its subcellular location is the early endosome membrane. It is found in the late endosome membrane. Its function is as follows. Functions as a negative regulator of the PI3 kinase/PI3K activity associated with endosomal membranes via BECN1, a core subunit of the PI3K complex. By modifying the phosphatidylinositol 3-phosphate/PtdInsP3 content of endosomal membranes may regulate endosome fusion, recycling, sorting and early to late endosome transport. It is for instance, required for the delivery of cargos like BST2/tetherin from early to late endosome and thereby participates indirectly to their degradation by the lysosome. May play a role in meiosis. This is WD repeat-containing protein 91 from Bos taurus (Bovine).